Reading from the N-terminus, the 552-residue chain is ATP synthase subunit alpha (552 aa).

173-180 lines the ATP pocket; that stretch reads GDRQTGKT. Residues 526-552 are disordered; it reads ASPLDPSAVRKESIPVHRAPARTDDEG. The span at 533–552 shows a compositional bias: basic and acidic residues; the sequence is AVRKESIPVHRAPARTDDEG.

This sequence belongs to the ATPase alpha/beta chains family. As to quaternary structure, F-type ATPases have 2 components, CF(1) - the catalytic core - and CF(0) - the membrane proton channel. CF(1) has five subunits: alpha(3), beta(3), gamma(1), delta(1), epsilon(1). CF(0) has three main subunits: a(1), b(2) and c(9-12). The alpha and beta chains form an alternating ring which encloses part of the gamma chain. CF(1) is attached to CF(0) by a central stalk formed by the gamma and epsilon chains, while a peripheral stalk is formed by the delta and b chains.

It is found in the cell membrane. The catalysed reaction is ATP + H2O + 4 H(+)(in) = ADP + phosphate + 5 H(+)(out). In terms of biological role, produces ATP from ADP in the presence of a proton gradient across the membrane. The alpha chain is a regulatory subunit. This is ATP synthase subunit alpha from Frankia alni (strain DSM 45986 / CECT 9034 / ACN14a).